A 213-amino-acid polypeptide reads, in one-letter code: ATP-dependent Clp protease proteolytic subunit (213 aa).

The Nucleophile role is filled by Ser-114. The active site involves His-139.

Belongs to the peptidase S14 family. In terms of assembly, fourteen ClpP subunits assemble into 2 heptameric rings which stack back to back to give a disk-like structure with a central cavity, resembling the structure of eukaryotic proteasomes.

It localises to the cytoplasm. It carries out the reaction Hydrolysis of proteins to small peptides in the presence of ATP and magnesium. alpha-casein is the usual test substrate. In the absence of ATP, only oligopeptides shorter than five residues are hydrolyzed (such as succinyl-Leu-Tyr-|-NHMec, and Leu-Tyr-Leu-|-Tyr-Trp, in which cleavage of the -Tyr-|-Leu- and -Tyr-|-Trp bonds also occurs).. In terms of biological role, cleaves peptides in various proteins in a process that requires ATP hydrolysis. Has a chymotrypsin-like activity. Plays a major role in the degradation of misfolded proteins. In Methylobacillus flagellatus (strain ATCC 51484 / DSM 6875 / VKM B-1610 / KT), this protein is ATP-dependent Clp protease proteolytic subunit.